We begin with the raw amino-acid sequence, 436 residues long: 3-ketoacyl-CoA thiolase (436 aa).

The active-site Acyl-thioester intermediate is the Cys99. Active-site proton acceptor residues include His392 and Cys422.

It belongs to the thiolase-like superfamily. Thiolase family. In terms of assembly, heterotetramer of two alpha chains (FadJ) and two beta chains (FadI).

It is found in the cytoplasm. The catalysed reaction is an acyl-CoA + acetyl-CoA = a 3-oxoacyl-CoA + CoA. Its pathway is lipid metabolism; fatty acid beta-oxidation. Its function is as follows. Catalyzes the final step of fatty acid oxidation in which acetyl-CoA is released and the CoA ester of a fatty acid two carbons shorter is formed. The polypeptide is 3-ketoacyl-CoA thiolase (Salmonella dublin (strain CT_02021853)).